A 95-amino-acid polypeptide reads, in one-letter code: uncharacterized protein (95 aa).

The next 3 helical transmembrane spans lie at 3–23 (YTVL…GFSF), 35–55 (ILFL…MMLT), and 63–83 (MLGV…VMII).

It localises to the cell membrane. This is an uncharacterized protein from Mycoplasma pneumoniae (strain ATCC 29342 / M129 / Subtype 1) (Mycoplasmoides pneumoniae).